The primary structure comprises 296 residues: GTPase Era (296 aa).

Residues 3–170 (KSGFVTIVGR…KELMFKYIPE (168 aa)) enclose the Era-type G domain. The interval 11-18 (GRPNVGKS) is G1. 11 to 18 (GRPNVGKS) provides a ligand contact to GTP. The tract at residues 37 to 41 (QTTRN) is G2. The tract at residues 58-61 (DTPG) is G3. Residues 58-62 (DTPGI) and 120-123 (NKID) contribute to the GTP site. The interval 120–123 (NKID) is G4. Residues 149-151 (ISA) form a G5 region. The KH type-2 domain occupies 201–278 (LSEEVPHGIA…YIRLWVKVKE (78 aa)).

Belongs to the TRAFAC class TrmE-Era-EngA-EngB-Septin-like GTPase superfamily. Era GTPase family. In terms of assembly, monomer.

It is found in the cytoplasm. It localises to the cell membrane. In terms of biological role, an essential GTPase that binds both GDP and GTP, with rapid nucleotide exchange. Plays a role in 16S rRNA processing and 30S ribosomal subunit biogenesis and possibly also in cell cycle regulation and energy metabolism. The chain is GTPase Era from Clostridium botulinum (strain Okra / Type B1).